Consider the following 64-residue polypeptide: Large ribosomal subunit protein bL32 (64 aa).

Residues M1 to P10 show a composition bias toward basic residues. The segment at M1–K22 is disordered. A compositionally biased stretch (basic and acidic residues) spans S11–K22.

Belongs to the bacterial ribosomal protein bL32 family.

The polypeptide is Large ribosomal subunit protein bL32 (Sorangium cellulosum (strain So ce56) (Polyangium cellulosum (strain So ce56))).